A 240-amino-acid chain; its full sequence is Ribonuclease 3 (240 aa).

Positions 9–141 (VEEFQKKTGI…LLAAIYLDQG (133 aa)) constitute an RNase III domain. Residue Glu54 participates in Mg(2+) binding. Asp58 is an active-site residue. Mg(2+) contacts are provided by Asp127 and Glu130. The active site involves Glu130. The DRBM domain occupies 168–237 (DYKTALQEIV…ARIAYEKLLK (70 aa)).

The protein belongs to the ribonuclease III family. As to quaternary structure, homodimer. Requires Mg(2+) as cofactor.

It is found in the cytoplasm. The catalysed reaction is Endonucleolytic cleavage to 5'-phosphomonoester.. Digests double-stranded RNA. Involved in the processing of primary rRNA transcript to yield the immediate precursors to the large and small rRNAs (23S and 16S). Processes some mRNAs, and tRNAs when they are encoded in the rRNA operon. Processes pre-crRNA and tracrRNA of type II CRISPR loci if present in the organism. In Thermotoga sp. (strain RQ2), this protein is Ribonuclease 3.